A 706-amino-acid polypeptide reads, in one-letter code: Elongation factor G (706 aa).

One can recognise a tr-type G domain in the interval 15-291 (LKTRNIGISA…GVLDYLASPV (277 aa)). GTP is bound by residues 24 to 31 (AHIDSGKT), 91 to 95 (DTPGH), and 145 to 148 (NKLD).

The protein belongs to the TRAFAC class translation factor GTPase superfamily. Classic translation factor GTPase family. EF-G/EF-2 subfamily.

The protein resides in the cytoplasm. Catalyzes the GTP-dependent ribosomal translocation step during translation elongation. During this step, the ribosome changes from the pre-translocational (PRE) to the post-translocational (POST) state as the newly formed A-site-bound peptidyl-tRNA and P-site-bound deacylated tRNA move to the P and E sites, respectively. Catalyzes the coordinated movement of the two tRNA molecules, the mRNA and conformational changes in the ribosome. This is Elongation factor G from Leptospira interrogans serogroup Icterohaemorrhagiae serovar copenhageni (strain Fiocruz L1-130).